The following is a 300-amino-acid chain: LysM and putative peptidoglycan-binding domain-containing protein 3 (300 aa).

Residues 1–216 (MAGRNQNRTA…PYYGADWGMG (216 aa)) lie on the Extracellular side of the membrane. Residues Asn-7 and Asn-26 are each glycosylated (N-linked (GlcNAc...) asparagine). Ser-55 carries the phosphoserine modification. The region spanning 65 to 109 (LTKDIQEGDTLNAVALQYCCTVADIKRVNNLISDQDFFALRSIKI) is the LysM domain. A disordered region spans residues 136 to 157 (PYFQEQDTVPANDSPSSSESAG). A compositionally biased stretch (polar residues) spans 140-156 (EQDTVPANDSPSSSESA). Asn-199 is a glycosylation site (N-linked (GlcNAc...) asparagine). A helical membrane pass occupies residues 217-237 (WWTAVVIMLIVGIITPVFYLL). At 238-300 (YYEILAKVDV…LYRQDPQARD (63 aa)) the chain is on the cytoplasmic side. The disordered stretch occupies residues 253–300 (VDSSHLHPGLTPPSHHREMGNAIGPTKGIPVGQQDDHRLYRQDPQARD). Over residues 286-300 (QDDHRLYRQDPQARD) the composition is skewed to basic and acidic residues.

It localises to the cell membrane. The protein localises to the golgi apparatus. Essential for Golgi structural integrity. This Rattus norvegicus (Rat) protein is LysM and putative peptidoglycan-binding domain-containing protein 3 (Lysmd3).